An 81-amino-acid polypeptide reads, in one-letter code: Cytochrome b559 subunit alpha (81 aa).

The helical transmembrane segment at 21–35 threads the bilayer; sequence VIHSITIPMLFIAGW. H23 contributes to the heme binding site.

It belongs to the PsbE/PsbF family. As to quaternary structure, heterodimer of an alpha subunit and a beta subunit. PSII is composed of 1 copy each of membrane proteins PsbA, PsbB, PsbC, PsbD, PsbE, PsbF, PsbH, PsbI, PsbJ, PsbK, PsbL, PsbM, PsbT, PsbX, PsbY, PsbZ, Psb30/Ycf12, peripheral proteins PsbO, CyanoQ (PsbQ), PsbU, PsbV and a large number of cofactors. It forms dimeric complexes. Requires heme b as cofactor.

It localises to the cellular thylakoid membrane. In terms of biological role, this b-type cytochrome is tightly associated with the reaction center of photosystem II (PSII). PSII is a light-driven water:plastoquinone oxidoreductase that uses light energy to abstract electrons from H(2)O, generating O(2) and a proton gradient subsequently used for ATP formation. It consists of a core antenna complex that captures photons, and an electron transfer chain that converts photonic excitation into a charge separation. The sequence is that of Cytochrome b559 subunit alpha from Rippkaea orientalis (strain PCC 8801 / RF-1) (Cyanothece sp. (strain PCC 8801)).